The chain runs to 311 residues: Oxygen-dependent coproporphyrinogen-III oxidase (311 aa).

Ser-93 contributes to the substrate binding site. His-97 and His-107 together coordinate a divalent metal cation. His-107 acts as the Proton donor in catalysis. 109 to 111 (NVR) is a substrate binding site. A divalent metal cation is bound by residues His-153 and His-184. Residues 252-287 (YVEFNLVFDRGTLFGLQSGGRTESILMSLPPVVKWR) form an important for dimerization region. Residue 270 to 272 (GGR) participates in substrate binding.

It belongs to the aerobic coproporphyrinogen-III oxidase family. Homodimer. A divalent metal cation is required as a cofactor.

The protein resides in the cytoplasm. It carries out the reaction coproporphyrinogen III + O2 + 2 H(+) = protoporphyrinogen IX + 2 CO2 + 2 H2O. It functions in the pathway porphyrin-containing compound metabolism; protoporphyrin-IX biosynthesis; protoporphyrinogen-IX from coproporphyrinogen-III (O2 route): step 1/1. In terms of biological role, involved in the heme biosynthesis. Catalyzes the aerobic oxidative decarboxylation of propionate groups of rings A and B of coproporphyrinogen-III to yield the vinyl groups in protoporphyrinogen-IX. The polypeptide is Oxygen-dependent coproporphyrinogen-III oxidase (Aromatoleum aromaticum (strain DSM 19018 / LMG 30748 / EbN1) (Azoarcus sp. (strain EbN1))).